The primary structure comprises 671 residues: TOM1-like protein 6 (671 aa).

Ala-2 carries the N-acetylalanine modification. In terms of domain architecture, VHS spans 15-144; the sequence is ATSDLLLGPD…ELRRSGVEFP (130 aa). The residue at position 147 (Ser-147) is a Phosphoserine. The region spanning 229–317 is the GAT domain; sequence EVEGLSLSSI…LLAKHDAIAS (89 aa). Disordered regions lie at residues 320–620 and 636–671; these read PLPV…VGQK and GSAD…RKMI. Low complexity predominate over residues 334-362; that stretch reads ASKPADSSPKSSEAKDSSSIAGSSSPIPA. Residues 372-382 show a composition bias toward acidic residues; the sequence is DEEYEEEEDEF. The span at 395-405 shows a compositional bias: polar residues; the sequence is SVTTDPTSLES. The span at 407–417 shows a compositional bias: low complexity; that stretch reads NAASNALALAL. Over residues 444–459 the composition is skewed to pro residues; that stretch reads STPPAPSSQPSPPPPA. Low complexity predominate over residues 483–554; sequence AQQQQPQQPQ…QPSTRPQNPY (72 aa). Composition is skewed to polar residues over residues 562–598 and 605–616; these read ASTS…NSFP and QATSTASNSGVS. Ser-596 carries the phosphoserine modification. The span at 647 to 663 shows a compositional bias: low complexity; it reads NSSNGSQNLSGSQTQQS.

The protein belongs to the TOM1 family. As to expression, ubiquitously expressed.

Its subcellular location is the endosome. It is found in the multivesicular body. It localises to the cytoplasm. The protein localises to the early endosome membrane. Acts as a gatekeeper for degradative protein sorting to the vacuole. Plays a role in recognition of ubiquitinated PIN2 auxin carrier at the plasma membrane and further to its endocytic sorting. Binds ubiquitin in vitro. Might contribute to the loading of the ESCRT machinery. This Arabidopsis thaliana (Mouse-ear cress) protein is TOM1-like protein 6.